Consider the following 261-residue polypeptide: Probable pectin methylesterase CGR2 (261 aa).

Topologically, residues 1 to 35 (MARRQVGSTRRVGDGGSFPFAGALHSKSRSSPLLS) are cytoplasmic. A helical transmembrane segment spans residues 36 to 56 (ICLVLVGACLLIGYAYSGPGI). The Lumenal portion of the chain corresponds to 57-261 (FKSIKEVSKV…CQVFHLKPLH (205 aa)). An N-linked (GlcNAc...) asparagine glycan is attached at Asn174.

The protein belongs to the class I-like SAM-binding methyltransferase superfamily.

It localises to the golgi apparatus membrane. Together with CGR3, required for homogalacturonan pectins (HG) methylesterification in the Golgi apparatus prior to integration into cell walls, essential for general growth and development. Promotes rosette growth. Impacts carbon (C) partitioning, photosynthesis and respiration efficiency by influencing leaf mesophyll cell walls morphology and physiology; pectin methylesterification modulates both expansion and positioning of cells in leaves, probably by changing cell walls plasticity. This chain is Probable pectin methylesterase CGR2, found in Arabidopsis thaliana (Mouse-ear cress).